Reading from the N-terminus, the 166-residue chain is UPF0304 protein VIBHAR_01542 (166 aa).

It belongs to the UPF0304 family.

This Vibrio campbellii (strain ATCC BAA-1116) protein is UPF0304 protein VIBHAR_01542.